The chain runs to 298 residues: Thymidylate synthase (298 aa).

DUMP-binding positions include R25 and 159–160 (RR). The active-site Nucleophile is the C179. Residues 200–203 (RSVD), N211, and 241–243 (HLY) each bind dUMP. D203 contacts (6R)-5,10-methylene-5,6,7,8-tetrahydrofolate. A297 contacts (6R)-5,10-methylene-5,6,7,8-tetrahydrofolate.

It belongs to the thymidylate synthase family. Bacterial-type ThyA subfamily. In terms of assembly, homodimer.

It is found in the cytoplasm. The enzyme catalyses dUMP + (6R)-5,10-methylene-5,6,7,8-tetrahydrofolate = 7,8-dihydrofolate + dTMP. It participates in pyrimidine metabolism; dTTP biosynthesis. Catalyzes the reductive methylation of 2'-deoxyuridine-5'-monophosphate (dUMP) to 2'-deoxythymidine-5'-monophosphate (dTMP) while utilizing 5,10-methylenetetrahydrofolate (mTHF) as the methyl donor and reductant in the reaction, yielding dihydrofolate (DHF) as a by-product. This enzymatic reaction provides an intracellular de novo source of dTMP, an essential precursor for DNA biosynthesis. The sequence is that of Thymidylate synthase from Cereibacter sphaeroides (strain ATCC 17025 / ATH 2.4.3) (Rhodobacter sphaeroides).